The primary structure comprises 438 residues: tRNA-2-methylthio-N(6)-dimethylallyladenosine synthase (438 aa).

The 121-residue stretch at 3–123 (KRLFVKTYGC…LPEMVAQAAR (121 aa)) folds into the MTTase N-terminal domain. Cys-12, Cys-48, Cys-86, Cys-160, Cys-164, and Cys-167 together coordinate [4Fe-4S] cluster. Residues 146–374 (HAEGTSAFLS…QALLLDQTMR (229 aa)) form the Radical SAM core domain. One can recognise a TRAM domain in the interval 377-438 (HACVGREMRI…HPNSLEAVPA (62 aa)).

It belongs to the methylthiotransferase family. MiaB subfamily. As to quaternary structure, monomer. [4Fe-4S] cluster serves as cofactor.

It is found in the cytoplasm. It catalyses the reaction N(6)-dimethylallyladenosine(37) in tRNA + (sulfur carrier)-SH + AH2 + 2 S-adenosyl-L-methionine = 2-methylsulfanyl-N(6)-dimethylallyladenosine(37) in tRNA + (sulfur carrier)-H + 5'-deoxyadenosine + L-methionine + A + S-adenosyl-L-homocysteine + 2 H(+). Its function is as follows. Catalyzes the methylthiolation of N6-(dimethylallyl)adenosine (i(6)A), leading to the formation of 2-methylthio-N6-(dimethylallyl)adenosine (ms(2)i(6)A) at position 37 in tRNAs that read codons beginning with uridine. The polypeptide is tRNA-2-methylthio-N(6)-dimethylallyladenosine synthase (Paramagnetospirillum magneticum (strain ATCC 700264 / AMB-1) (Magnetospirillum magneticum)).